A 514-amino-acid chain; its full sequence is ATP synthase subunit alpha (514 aa).

Residue 170–177 (GDRQIGKT) coordinates ATP.

This sequence belongs to the ATPase alpha/beta chains family. As to quaternary structure, F-type ATPases have 2 components, CF(1) - the catalytic core - and CF(0) - the membrane proton channel. CF(1) has five subunits: alpha(3), beta(3), gamma(1), delta(1), epsilon(1). CF(0) has three main subunits: a(1), b(2) and c(9-12). The alpha and beta chains form an alternating ring which encloses part of the gamma chain. CF(1) is attached to CF(0) by a central stalk formed by the gamma and epsilon chains, while a peripheral stalk is formed by the delta and b chains.

It is found in the cell inner membrane. The catalysed reaction is ATP + H2O + 4 H(+)(in) = ADP + phosphate + 5 H(+)(out). Produces ATP from ADP in the presence of a proton gradient across the membrane. The alpha chain is a regulatory subunit. The chain is ATP synthase subunit alpha from Pseudomonas savastanoi pv. phaseolicola (strain 1448A / Race 6) (Pseudomonas syringae pv. phaseolicola (strain 1448A / Race 6)).